The following is a 108-amino-acid chain: DNA-binding protein HBbu (108 aa).

It belongs to the bacterial histone-like protein family.

Its function is as follows. Histone-like DNA-binding protein which is capable of wrapping DNA to stabilize it, and thus to prevent its denaturation under extreme environmental conditions. The chain is DNA-binding protein HBbu (hbb) from Borrelia garinii subsp. bavariensis (strain ATCC BAA-2496 / DSM 23469 / PBi) (Borreliella bavariensis).